An 88-amino-acid chain; its full sequence is Exodeoxyribonuclease 7 small subunit (88 aa).

Residues Ser-68–Gln-88 are disordered.

This sequence belongs to the XseB family. As to quaternary structure, heterooligomer composed of large and small subunits.

It localises to the cytoplasm. The catalysed reaction is Exonucleolytic cleavage in either 5'- to 3'- or 3'- to 5'-direction to yield nucleoside 5'-phosphates.. In terms of biological role, bidirectionally degrades single-stranded DNA into large acid-insoluble oligonucleotides, which are then degraded further into small acid-soluble oligonucleotides. The polypeptide is Exodeoxyribonuclease 7 small subunit (Xylella fastidiosa (strain 9a5c)).